Reading from the N-terminus, the 389-residue chain is Phospho-N-acetylmuramoyl-pentapeptide-transferase (389 aa).

10 helical membrane passes run Arg25–Ile45, Met74–Gly94, Phe97–Tyr117, Phe134–Glu154, Ile190–Ser210, Gly222–Met242, Ala259–Phe279, Val286–Ile306, Ile311–Val331, and Gln366–Leu386.

Belongs to the glycosyltransferase 4 family. MraY subfamily. Mg(2+) is required as a cofactor.

The protein resides in the cell inner membrane. It carries out the reaction UDP-N-acetyl-alpha-D-muramoyl-L-alanyl-gamma-D-glutamyl-meso-2,6-diaminopimeloyl-D-alanyl-D-alanine + di-trans,octa-cis-undecaprenyl phosphate = di-trans,octa-cis-undecaprenyl diphospho-N-acetyl-alpha-D-muramoyl-L-alanyl-D-glutamyl-meso-2,6-diaminopimeloyl-D-alanyl-D-alanine + UMP. Its pathway is cell wall biogenesis; peptidoglycan biosynthesis. Catalyzes the initial step of the lipid cycle reactions in the biosynthesis of the cell wall peptidoglycan: transfers peptidoglycan precursor phospho-MurNAc-pentapeptide from UDP-MurNAc-pentapeptide onto the lipid carrier undecaprenyl phosphate, yielding undecaprenyl-pyrophosphoryl-MurNAc-pentapeptide, known as lipid I. The chain is Phospho-N-acetylmuramoyl-pentapeptide-transferase from Ralstonia pickettii (strain 12J).